We begin with the raw amino-acid sequence, 519 residues long: Histidine ammonia-lyase (519 aa).

The segment at residues 146–148 is a cross-link (5-imidazolinone (Ala-Gly)); the sequence is ASG. Ser-147 bears the 2,3-didehydroalanine (Ser) mark.

Belongs to the PAL/histidase family. In terms of processing, contains an active site 4-methylidene-imidazol-5-one (MIO), which is formed autocatalytically by cyclization and dehydration of residues Ala-Ser-Gly.

The protein resides in the cytoplasm. It catalyses the reaction L-histidine = trans-urocanate + NH4(+). The protein operates within amino-acid degradation; L-histidine degradation into L-glutamate; N-formimidoyl-L-glutamate from L-histidine: step 1/3. This Psychrobacter sp. (strain PRwf-1) protein is Histidine ammonia-lyase.